A 120-amino-acid polypeptide reads, in one-letter code: Cytochrome c-550 (120 aa).

Residues 5 to 25 form a helical membrane-spanning segment; that stretch reads PLIPFLLIAVLGIGLTFFLSV. Topologically, residues 26–120 are periplasmic; that stretch reads KGLDDSREIA…DMAEWVSKIK (95 aa). Heme c-binding residues include Cys-60, Cys-63, His-64, and Met-99.

Post-translationally, binds 1 heme c group covalently per subunit.

It is found in the cell membrane. Functionally, not essential for growth on minimal or rich media. The polypeptide is Cytochrome c-550 (cccA) (Bacillus subtilis (strain 168)).